A 159-amino-acid chain; its full sequence is Large ribosomal subunit protein uL11 (159 aa).

This sequence belongs to the universal ribosomal protein uL11 family. Part of the ribosomal stalk of the 50S ribosomal subunit. Interacts with L10 and the large rRNA to form the base of the stalk. L10 forms an elongated spine to which L12 dimers bind in a sequential fashion forming a multimeric L10(L12)X complex.

In terms of biological role, forms part of the ribosomal stalk which helps the ribosome interact with GTP-bound translation factors. The chain is Large ribosomal subunit protein uL11 from Nitrosopumilus maritimus (strain SCM1).